Here is a 266-residue protein sequence, read N- to C-terminus: MHKKLTKEVDYMDAVLYVCHGSRVKEGADQAVAFIERCKKNLDVPIQEVCFLELASPTIEQGFEACIEQGATRIAIVPLLLLTAAHAKHDIPEEIQKVYERYPQVEVLYGEPFGVDERIVDILVERINETNVDKHEDSMVLLVGRGSSDPAVKRDLNEIAQLLKGKGAFKEVSTCYLAAASPNLKEGLHLAKRTSYKQVFVLPYLLFTGILMNEIKEELEQLSTDAQQFILANYLGYHDGLAHILSHQVKTLLSSKGNQYDVYRYA.

Fe cation is bound by residues H20 and H86.

It belongs to the CbiX family. SirB subfamily.

It carries out the reaction siroheme + 2 H(+) = sirohydrochlorin + Fe(2+). It participates in porphyrin-containing compound metabolism; siroheme biosynthesis; siroheme from sirohydrochlorin: step 1/1. Chelates iron to the siroheme precursor. This is Sirohydrochlorin ferrochelatase (sirB) from Priestia megaterium (Bacillus megaterium).